A 34-amino-acid chain; its full sequence is Unknown protein 5 (34 aa).

This is Unknown protein 5 from Pseudotsuga menziesii (Douglas-fir).